A 377-amino-acid chain; its full sequence is D-alanine--D-alanine ligase (377 aa).

In terms of domain architecture, ATP-grasp spans 140-349 (KELLTVNGIR…NAKLVDMLID (210 aa)). 170-225 (VAELGNIVFVKAANQGSSVGISRVTNAEEYTEALSDSFQYDYKVLIEEAVNGAREL) lines the ATP pocket. Asp303, Glu316, and Asn318 together coordinate Mg(2+).

It belongs to the D-alanine--D-alanine ligase family. Mg(2+) is required as a cofactor. It depends on Mn(2+) as a cofactor.

The protein localises to the cytoplasm. It carries out the reaction 2 D-alanine + ATP = D-alanyl-D-alanine + ADP + phosphate + H(+). Its pathway is cell wall biogenesis; peptidoglycan biosynthesis. Cell wall formation. The sequence is that of D-alanine--D-alanine ligase from Leuconostoc mesenteroides.